A 291-amino-acid polypeptide reads, in one-letter code: Zinc transporter ZupT (291 aa).

Helical transmembrane passes span 8–28 (IFIAMLLTLFAGFSTAIGSII), 39–59 (VLSLGLGFSAGVMIYISFMEI), 74–94 (HWAELLGLACFFGGILISLLI), 147–167 (GIFTALAIAIHNFPEGFATFI), 174–194 (TLGIAIAIAVAIHNIPEGLAV), 209–229 (FIYSALSGFAEPLGAFVGALI), 233–253 (FIGDLTLAISFAVIAGIMVFI), and 271–291 (SLYGLIAGMAIMALSLNLLGQ). Positions 158 and 161 each coordinate Fe(2+). E161 and H186 together coordinate Zn(2+). Residues N187, E190, and E219 each coordinate Fe(2+). E190 provides a ligand contact to Zn(2+).

Belongs to the ZIP transporter (TC 2.A.5) family. ZupT subfamily.

The protein localises to the cell inner membrane. The catalysed reaction is Zn(2+)(in) = Zn(2+)(out). Mediates zinc uptake. May also transport other divalent cations. In Campylobacter jejuni subsp. jejuni serotype O:2 (strain ATCC 700819 / NCTC 11168), this protein is Zinc transporter ZupT.